A 441-amino-acid polypeptide reads, in one-letter code: Xaa-Pro dipeptidase (441 aa).

Mn(2+) contacts are provided by Asp244, Asp255, His336, Glu381, and Glu420.

The protein belongs to the peptidase M24B family. Bacterial-type prolidase subfamily. It depends on Mn(2+) as a cofactor.

The enzyme catalyses Xaa-L-Pro dipeptide + H2O = an L-alpha-amino acid + L-proline. In terms of biological role, splits dipeptides with a prolyl residue in the C-terminal position. The polypeptide is Xaa-Pro dipeptidase (Xanthomonas campestris pv. campestris (strain B100)).